The following is a 200-amino-acid chain: NADH-quinone oxidoreductase subunit C (200 aa).

The protein belongs to the complex I 30 kDa subunit family. In terms of assembly, NDH-1 is composed of 14 different subunits. Subunits NuoB, C, D, E, F, and G constitute the peripheral sector of the complex.

The protein localises to the cell inner membrane. The enzyme catalyses a quinone + NADH + 5 H(+)(in) = a quinol + NAD(+) + 4 H(+)(out). Its function is as follows. NDH-1 shuttles electrons from NADH, via FMN and iron-sulfur (Fe-S) centers, to quinones in the respiratory chain. The immediate electron acceptor for the enzyme in this species is believed to be ubiquinone. Couples the redox reaction to proton translocation (for every two electrons transferred, four hydrogen ions are translocated across the cytoplasmic membrane), and thus conserves the redox energy in a proton gradient. This chain is NADH-quinone oxidoreductase subunit C, found in Chelativorans sp. (strain BNC1).